The primary structure comprises 84 residues: MITAALTIYTTSWCGYCLRLKTALTANRIAYDEVDIEHNRAAAEFVGSVNGGNRTVPTVKFADGSTLTNPSADEVKAKLVKIAG.

The Glutaredoxin domain occupies 1–84 (MITAALTIYT…VKAKLVKIAG (84 aa)).

The protein is Putative glutaredoxin MT3292 of Mycobacterium tuberculosis (strain CDC 1551 / Oshkosh).